Consider the following 209-residue polypeptide: MRVEYGSVEKDGSADLDVDWLADGWVALLRRWLADAEAAGIAEPNAIVLGTVDAAGRPVTRTVLCKSVDDTGITFFTNYGSAKGEDLASTPYASATFPWFALGRQVHVRGPVTKVSAEETADYWSKRPRGSQLGAWASQQSRPIASRAELLDQLAEVTERFADHDTVPVPPDWGGYRITAEVVEFWQGRESRVHNRIRVHDGRIERLQP.

Substrate is bound by residues 2 to 5 (RVEY) and K66. FMN contacts are provided by residues 61–66 (RTVLCK), 76–77 (FT), K83, and Q105. Positions 123, 127, and 131 each coordinate substrate. Residues 140–141 (QS) and W186 each bind FMN. 192–194 (RVH) serves as a coordination point for substrate. R196 lines the FMN pocket.

It belongs to the pyridoxamine 5'-phosphate oxidase family. As to quaternary structure, homodimer. It depends on FMN as a cofactor.

The enzyme catalyses pyridoxamine 5'-phosphate + O2 + H2O = pyridoxal 5'-phosphate + H2O2 + NH4(+). It catalyses the reaction pyridoxine 5'-phosphate + O2 = pyridoxal 5'-phosphate + H2O2. It functions in the pathway cofactor metabolism; pyridoxal 5'-phosphate salvage; pyridoxal 5'-phosphate from pyridoxamine 5'-phosphate: step 1/1. Its pathway is cofactor metabolism; pyridoxal 5'-phosphate salvage; pyridoxal 5'-phosphate from pyridoxine 5'-phosphate: step 1/1. In terms of biological role, catalyzes the oxidation of either pyridoxine 5'-phosphate (PNP) or pyridoxamine 5'-phosphate (PMP) into pyridoxal 5'-phosphate (PLP). The chain is Pyridoxine/pyridoxamine 5'-phosphate oxidase from Mycobacterium sp. (strain JLS).